Consider the following 167-residue polypeptide: CGG triplet repeat-binding protein 1 (167 aa).

At serine 56 the chain carries Phosphoserine. A disordered region spans residues 65–86 (KTHTKRKAEFEEQNVRKKQRPL). Residues 80 to 84 (RKKQR) carry the Nuclear localization signal motif. A Phosphoserine modification is found at serine 164.

The protein localises to the nucleus. In terms of biological role, binds to nonmethylated 5'-d(CGG)(n)-3' trinucleotide repeats in the FMR1 promoter. May play a role in regulating FMR1 promoter. This is CGG triplet repeat-binding protein 1 (Cggbp1) from Mus musculus (Mouse).